An 89-amino-acid polypeptide reads, in one-letter code: Ragulator complex protein LAMTOR5 homolog (89 aa).

This sequence belongs to the LAMTOR5 family. In terms of assembly, part of the Ragulator complex.

It localises to the cytoplasm. The protein resides in the lysosome. Its function is as follows. Regulator of the TOR pathway, a signaling cascade that promotes cell growth in response to growth factors, energy levels, and amino acids. As part of the Ragulator complex, may activate the TOR signaling cascade in response to amino acids. The polypeptide is Ragulator complex protein LAMTOR5 homolog (Dictyostelium discoideum (Social amoeba)).